A 142-amino-acid polypeptide reads, in one-letter code: Deoxyuridine 5'-triphosphate nucleotidohydrolase (142 aa).

Residues 62 to 64 (RSG), Asn-75, and 79 to 81 (TID) contribute to the substrate site.

It belongs to the dUTPase family. The cofactor is Mg(2+).

It carries out the reaction dUTP + H2O = dUMP + diphosphate + H(+). It participates in pyrimidine metabolism; dUMP biosynthesis; dUMP from dCTP (dUTP route): step 2/2. In terms of biological role, this enzyme is involved in nucleotide metabolism: it produces dUMP, the immediate precursor of thymidine nucleotides and it decreases the intracellular concentration of dUTP so that uracil cannot be incorporated into DNA. This Clostridium novyi (strain NT) protein is Deoxyuridine 5'-triphosphate nucleotidohydrolase.